Reading from the N-terminus, the 369-residue chain is Extracellular signal-regulated kinase 2 (369 aa).

A Protein kinase domain is found at 14-304 (YEVLQKIGKG…AEEALAHPFV (291 aa)). ATP-binding positions include 20–28 (IGKGAYGIV) and lysine 43. The active-site Proton acceptor is the aspartate 137. A Phosphothreonine modification is found at threonine 176. Residues 176–178 (TEY) carry the TXY motif. Tyrosine 178 carries the phosphotyrosine modification. Residues 346–369 (KKKEERKKQTNPTKPDTTAPTLST) are disordered. Polar residues predominate over residues 355-369 (TNPTKPDTTAPTLST).

Belongs to the protein kinase superfamily. CMGC Ser/Thr protein kinase family. MAP kinase subfamily. It depends on Mg(2+) as a cofactor. In terms of processing, dually phosphorylated on Thr-176 and Tyr-178, which activates the enzyme.

It catalyses the reaction L-seryl-[protein] + ATP = O-phospho-L-seryl-[protein] + ADP + H(+). The enzyme catalyses L-threonyl-[protein] + ATP = O-phospho-L-threonyl-[protein] + ADP + H(+). With respect to regulation, activated by tyrosine and threonine phosphorylation. In terms of biological role, implicated in the relay of the cAMP chemotactic signal and cell differentiation. Important for receptor-mediated activation of adenylyl cyclase. The protein is Extracellular signal-regulated kinase 2 (erkB) of Dictyostelium discoideum (Social amoeba).